Here is a 337-residue protein sequence, read N- to C-terminus: Glyceraldehyde-3-phosphate dehydrogenase 2 (337 aa).

Residues 11-12 (RI), aspartate 35, arginine 79, and threonine 121 contribute to the NAD(+) site. Residues 153–155 (SCT), threonine 184, arginine 199, 212–213 (TG), and arginine 235 each bind D-glyceraldehyde 3-phosphate. The active-site Nucleophile is the cysteine 154. Residue asparagine 317 participates in NAD(+) binding.

This sequence belongs to the glyceraldehyde-3-phosphate dehydrogenase family. As to quaternary structure, homotetramer.

It localises to the cytoplasm. It carries out the reaction D-glyceraldehyde 3-phosphate + phosphate + NADP(+) = (2R)-3-phospho-glyceroyl phosphate + NADPH + H(+). The catalysed reaction is D-glyceraldehyde 3-phosphate + phosphate + NAD(+) = (2R)-3-phospho-glyceroyl phosphate + NADH + H(+). Its pathway is carbohydrate degradation; glycolysis; pyruvate from D-glyceraldehyde 3-phosphate: step 1/5. Its function is as follows. Involved in photosynthetic carbon assimilation. Catalyzes the NAD(P)-dependent oxidative phosphorylation of glyceraldehyde 3-phosphate (G3P) to 1,3-bisphosphoglycerate (BPG). The first reaction step involves the formation of a hemiacetal intermediate between G3P and a cysteine residue, and this hemiacetal intermediate is then oxidized to a thioester, with concomitant reduction of NAD to NADH. The reduced NADH is then exchanged with the second NAD, and the thioester is attacked by a nucleophilic inorganic phosphate to produce BPG. It can use both NADP and NAD. The polypeptide is Glyceraldehyde-3-phosphate dehydrogenase 2 (gap2) (Synechocystis sp. (strain ATCC 27184 / PCC 6803 / Kazusa)).